We begin with the raw amino-acid sequence, 374 residues long: 5-hydroxytryptamine receptor 1D (374 aa).

Residues 1–35 (MSPPNQSLEGLPQEASNRSLNVTGAWDPEVLQALR) are Extracellular-facing. 3 N-linked (GlcNAc...) asparagine glycosylation sites follow: N5, N17, and N21. The helical transmembrane segment at 36 to 61 (ISLVVVLSVITLATVLSNAFVLTTIL) threads the bilayer. At 62–72 (LTKKLHTPANY) the chain is on the cytoplasmic side. The helical transmembrane segment at 73–94 (LIGSLATTDLLVSILVMPISIA) threads the bilayer. Over 95 to 106 (YTTTRTWNFGQI) the chain is Extracellular. Residues 107 to 131 (LCDIWVSSDITCCTASILHLCVIAL) form a helical membrane-spanning segment. C108 and C185 are joined by a disulfide. Serotonin contacts are provided by D115 and C119. The DRY motif; important for ligand-induced conformation changes signature appears at 132 to 134 (DRY). At 132 to 151 (DRYWAITDALEYSKRRTAGH) the chain is on the cytoplasmic side. Residues 152–173 (AAAMIAAVWIISICISIPPLFW) form a helical membrane-spanning segment. Over 174–191 (RQATAHEEMSDCLVNTSQ) the chain is Extracellular. A helical transmembrane segment spans residues 192 to 215 (ISYTIYSTCGAFYIPSILLIILYG). The Cytoplasmic segment spans residues 216 to 297 (RIYVAARSRI…ISAARERKAT (82 aa)). Residues 298–323 (KTLGIILGAFIICWLPFFVVSLVLPI) traverse the membrane as a helical segment. S318 contacts serotonin. Residues 324–332 (CRDSCWIHP) are Extracellular-facing. Residues 333–356 (ALFDFFTWLGYLNSLINPVIYTVF) traverse the membrane as a helical segment. The short motif at 349-353 (NPVIY) is the NPxxY motif; important for ligand-induced conformation changes and signaling element. At 357–374 (NEDFRQAFQKVVHFRKIS) the chain is on the cytoplasmic side.

Belongs to the G-protein coupled receptor 1 family. In terms of assembly, homodimer. Heterodimer with HTR1B. As to expression, detected in the motor column in spinal cord, and in several cranial motor nuclei, including nucleus ambiguous, oculomotoris, trochelaris and abducens. Detected in gamma motor neurons in the lumbar spinal cord. Detected in proprioceptive sensory neurons in dorsal root ganglia.

It is found in the cell membrane. Functionally, G-protein coupled receptor for 5-hydroxytryptamine (serotonin). Also functions as a receptor for ergot alkaloid derivatives, various anxiolytic and antidepressant drugs and other psychoactive substances. Ligand binding causes a conformation change that triggers signaling via guanine nucleotide-binding proteins (G proteins) and modulates the activity of downstream effectors, such as adenylate cyclase. HTR1D is coupled to G(i)/G(o) G alpha proteins and mediates inhibitory neurotransmission by inhibiting adenylate cyclase activity. Regulates the release of 5-hydroxytryptamine in the brain, and thereby affects neural activity. May also play a role in regulating the release of other neurotransmitters. May play a role in vasoconstriction. This Mus musculus (Mouse) protein is 5-hydroxytryptamine receptor 1D (Htr1d).